The primary structure comprises 361 residues: Glucose 1-dehydrogenase (361 aa).

Cys41 contributes to the Zn(2+) binding site. Thr43 is a substrate binding site. Residues His68 and Glu69 each coordinate Zn(2+). Glu119, Glu156, and Asn160 together coordinate substrate. Position 156 (Glu156) interacts with Zn(2+). NADP(+) contacts are provided by residues 216–218, 275–277, 304–306, and Lys349; these read NRH, FGT, and SVD. Asp306 contacts substrate.

The protein belongs to the zinc-containing alcohol dehydrogenase family. Glucose 1-dehydrogenase subfamily. Homotetramer. Requires Zn(2+) as cofactor.

The catalysed reaction is D-glucose + NAD(+) = D-glucono-1,5-lactone + NADH + H(+). It carries out the reaction D-glucose + NADP(+) = D-glucono-1,5-lactone + NADPH + H(+). The enzyme catalyses D-galactose + NAD(+) = D-galactono-1,4-lactone + NADH + H(+). It catalyses the reaction D-galactose + NADP(+) = D-galactono-1,5-lactone + NADPH + H(+). Functionally, catalyzes the NAD(P)(+)-dependent oxidation of D-glucose to D-gluconate via gluconolactone. Is also significantly active with galactose as substrate, but not with mannose or glucose 6-phosphate. Can utilize both NAD(+) and NADP(+) as electron acceptor, with a marked preference for NADP(+). Physiologically, may be involved in the degradation of both glucose and galactose through a non-phosphorylative variant of the Entner-Doudoroff pathway. The chain is Glucose 1-dehydrogenase from Thermoplasma acidophilum (strain ATCC 25905 / DSM 1728 / JCM 9062 / NBRC 15155 / AMRC-C165).